Here is a 153-residue protein sequence, read N- to C-terminus: Large ribosomal subunit protein uL30 (153 aa).

This sequence belongs to the universal ribosomal protein uL30 family. In terms of assembly, part of the 50S ribosomal subunit.

The chain is Large ribosomal subunit protein uL30 from Methanosarcina barkeri (strain Fusaro / DSM 804).